A 407-amino-acid chain; its full sequence is Elongation factor Tu (407 aa).

Residues 10 to 217 (KPHVNVGTIG…ALDSYIPEPE (208 aa)) enclose the tr-type G domain. Residues 19-26 (GHVDHGKT) are G1. 19-26 (GHVDHGKT) provides a ligand contact to GTP. Residue Thr-26 participates in Mg(2+) binding. Positions 60-64 (GITIA) are G2. Positions 81–84 (DCPG) are G3. GTP-binding positions include 81-85 (DCPGH) and 136-139 (NKAD). A G4 region spans residues 136–139 (NKAD). A G5 region spans residues 184-186 (SAL).

Belongs to the TRAFAC class translation factor GTPase superfamily. Classic translation factor GTPase family. EF-Tu/EF-1A subfamily. In terms of assembly, monomer.

It is found in the cytoplasm. The enzyme catalyses GTP + H2O = GDP + phosphate + H(+). Functionally, GTP hydrolase that promotes the GTP-dependent binding of aminoacyl-tRNA to the A-site of ribosomes during protein biosynthesis. This Saccharophagus degradans (strain 2-40 / ATCC 43961 / DSM 17024) protein is Elongation factor Tu.